Here is a 222-residue protein sequence, read N- to C-terminus: Disulfide bond formation protein D (222 aa).

Positions Met-1–Gly-36 are cleaved as a signal peptide. The Thioredoxin domain maps to Asn-37–Lys-220. An intrachain disulfide couples Cys-69 to Cys-72.

It belongs to the thioredoxin family. DsbA subfamily.

It is found in the cell membrane. Its subcellular location is the membrane raft. In terms of biological role, required for the stabilization, possibly via formation of a disulfide bond, of the obligatory competence protein ComGC. May be required for the stability of secreted proteins with disulfide bonds. Not required for sporulation. This Bacillus subtilis (strain 168) protein is Disulfide bond formation protein D (bdbD).